A 276-amino-acid polypeptide reads, in one-letter code: Large ribosomal subunit protein uL2 (276 aa).

Residues 208–276 (KAGRNRHRGI…KLIISRRKGK (69 aa)) are disordered. A compositionally biased stretch (basic and acidic residues) spans 230–240 (DHPHGGGEGKK). Basic residues predominate over residues 255-276 (KGAKTRRKKASDKLIISRRKGK).

This sequence belongs to the universal ribosomal protein uL2 family. In terms of assembly, part of the 50S ribosomal subunit. Forms a bridge to the 30S subunit in the 70S ribosome.

Functionally, one of the primary rRNA binding proteins. Required for association of the 30S and 50S subunits to form the 70S ribosome, for tRNA binding and peptide bond formation. It has been suggested to have peptidyltransferase activity; this is somewhat controversial. Makes several contacts with the 16S rRNA in the 70S ribosome. The sequence is that of Large ribosomal subunit protein uL2 from Campylobacter lari (strain RM2100 / D67 / ATCC BAA-1060).